The primary structure comprises 160 residues: 3-hydroxyacyl-[acyl-carrier-protein] dehydratase FabZ (160 aa).

Histidine 63 is a catalytic residue.

This sequence belongs to the thioester dehydratase family. FabZ subfamily.

It is found in the cytoplasm. It carries out the reaction a (3R)-hydroxyacyl-[ACP] = a (2E)-enoyl-[ACP] + H2O. Functionally, involved in unsaturated fatty acids biosynthesis. Catalyzes the dehydration of short chain beta-hydroxyacyl-ACPs and long chain saturated and unsaturated beta-hydroxyacyl-ACPs. The sequence is that of 3-hydroxyacyl-[acyl-carrier-protein] dehydratase FabZ from Xylella fastidiosa (strain M23).